The chain runs to 147 residues: Hemoglobin subunit epsilon-4 (147 aa).

One can recognise a Globin domain in the interval 3–147 (HFTTEEKAAV…VANALAHKYH (145 aa)). The heme b site is built by histidine 64 and histidine 93.

The protein belongs to the globin family. As to expression, red blood cells.

Functionally, hemoglobin epsilon chain is a beta-type chain found in early embryos. In Bos taurus (Bovine), this protein is Hemoglobin subunit epsilon-4 (HBE4).